A 451-amino-acid chain; its full sequence is D-ribitol-5-phosphate cytidylyltransferase (451 aa).

A disordered region spans residues 1 to 29; sequence MEAGPPGSARPAEPGPCLSGQRGADHTAS.

It belongs to the IspD/TarI cytidylyltransferase family. IspD subfamily. As to quaternary structure, homodimer. Ubiquitously expressed, with high expression in brain.

The protein resides in the cytoplasm. Its subcellular location is the cytosol. It carries out the reaction D-ribitol 5-phosphate + CTP + H(+) = CDP-L-ribitol + diphosphate. The catalysed reaction is D-ribose 5-phosphate + CTP + H(+) = CDP-D-ribose + diphosphate. The enzyme catalyses D-ribulose 5-phosphate + CTP + H(+) = CDP-D-ribulose + diphosphate. Its pathway is protein modification; protein glycosylation. Cytidylyltransferase required for protein O-linked mannosylation. Catalyzes the formation of CDP-ribitol nucleotide sugar from D-ribitol 5-phosphate. CDP-ribitol is a substrate of FKTN during the biosynthesis of the phosphorylated O-mannosyl trisaccharide (N-acetylgalactosamine-beta-3-N-acetylglucosamine-beta-4-(phosphate-6-)mannose), a carbohydrate structure present in alpha-dystroglycan (DAG1), which is required for binding laminin G-like domain-containing extracellular proteins with high affinity. Shows activity toward other pentose phosphate sugars and mediates formation of CDP-ribulose or CDP-ribose using CTP and ribulose-5-phosphate or ribose-5-phosphate, respectively. Not Involved in dolichol production. In Homo sapiens (Human), this protein is D-ribitol-5-phosphate cytidylyltransferase.